The chain runs to 461 residues: UPF0210 protein LCABL_10110 (461 aa).

It belongs to the UPF0210 family. Homodimer.

This is UPF0210 protein LCABL_10110 from Lacticaseibacillus casei (strain BL23) (Lactobacillus casei).